Consider the following 204-residue polypeptide: Thiamine-phosphate synthase (204 aa).

Residues Gln-35–Lys-39 and Asn-67 each bind 4-amino-2-methyl-5-(diphosphooxymethyl)pyrimidine. Asp-68 and Asp-87 together coordinate Mg(2+). Residue Ser-106 coordinates 4-amino-2-methyl-5-(diphosphooxymethyl)pyrimidine. Residue Thr-132–Thr-134 coordinates 2-[(2R,5Z)-2-carboxy-4-methylthiazol-5(2H)-ylidene]ethyl phosphate. Lys-135 contacts 4-amino-2-methyl-5-(diphosphooxymethyl)pyrimidine. 2-[(2R,5Z)-2-carboxy-4-methylthiazol-5(2H)-ylidene]ethyl phosphate contacts are provided by residues Gly-163 and Val-183–Ser-184.

Belongs to the thiamine-phosphate synthase family. It depends on Mg(2+) as a cofactor.

It carries out the reaction 2-[(2R,5Z)-2-carboxy-4-methylthiazol-5(2H)-ylidene]ethyl phosphate + 4-amino-2-methyl-5-(diphosphooxymethyl)pyrimidine + 2 H(+) = thiamine phosphate + CO2 + diphosphate. The catalysed reaction is 2-(2-carboxy-4-methylthiazol-5-yl)ethyl phosphate + 4-amino-2-methyl-5-(diphosphooxymethyl)pyrimidine + 2 H(+) = thiamine phosphate + CO2 + diphosphate. It catalyses the reaction 4-methyl-5-(2-phosphooxyethyl)-thiazole + 4-amino-2-methyl-5-(diphosphooxymethyl)pyrimidine + H(+) = thiamine phosphate + diphosphate. Its pathway is cofactor biosynthesis; thiamine diphosphate biosynthesis; thiamine phosphate from 4-amino-2-methyl-5-diphosphomethylpyrimidine and 4-methyl-5-(2-phosphoethyl)-thiazole: step 1/1. In terms of biological role, condenses 4-methyl-5-(beta-hydroxyethyl)thiazole monophosphate (THZ-P) and 2-methyl-4-amino-5-hydroxymethyl pyrimidine pyrophosphate (HMP-PP) to form thiamine monophosphate (TMP). This chain is Thiamine-phosphate synthase, found in Vibrio parahaemolyticus serotype O3:K6 (strain RIMD 2210633).